The chain runs to 72 residues: Sec-independent protein translocase protein TatA (72 aa).

A helical membrane pass occupies residues 1 to 21 (MAGLSIWHVVIFAIVVILLFG). Residues 47-72 (DEAASLNSPRTIDAQVKTSESTSVKS) are disordered. The span at 51–72 (SLNSPRTIDAQVKTSESTSVKS) shows a compositional bias: polar residues.

This sequence belongs to the TatA/E family. The Tat system comprises two distinct complexes: a TatABC complex, containing multiple copies of TatA, TatB and TatC subunits, and a separate TatA complex, containing only TatA subunits. Substrates initially bind to the TatABC complex, which probably triggers association of the separate TatA complex to form the active translocon.

The protein resides in the cell inner membrane. Part of the twin-arginine translocation (Tat) system that transports large folded proteins containing a characteristic twin-arginine motif in their signal peptide across membranes. TatA could form the protein-conducting channel of the Tat system. This is Sec-independent protein translocase protein TatA from Acinetobacter baumannii (strain AB307-0294).